The following is a 244-amino-acid chain: Small ribosomal subunit protein uS3 (244 aa).

The KH type-2 domain occupies 39–107; it reads MRKFVMSELK…ETHLNIVEVR (69 aa). The tract at residues 214–244 is disordered; it reads ASERRALEGDAQGPASRERDRGDRRRERDNA. Residues 229-244 are compositionally biased toward basic and acidic residues; that stretch reads SRERDRGDRRRERDNA.

Belongs to the universal ribosomal protein uS3 family. In terms of assembly, part of the 30S ribosomal subunit. Forms a tight complex with proteins S10 and S14.

Its function is as follows. Binds the lower part of the 30S subunit head. Binds mRNA in the 70S ribosome, positioning it for translation. The polypeptide is Small ribosomal subunit protein uS3 (Rhizobium etli (strain CIAT 652)).